A 441-amino-acid polypeptide reads, in one-letter code: Proline--tRNA ligase (441 aa).

The protein belongs to the class-II aminoacyl-tRNA synthetase family. ProS type 2 subfamily. As to quaternary structure, homodimer.

It localises to the cytoplasm. It carries out the reaction tRNA(Pro) + L-proline + ATP = L-prolyl-tRNA(Pro) + AMP + diphosphate. Catalyzes the attachment of proline to tRNA(Pro) in a two-step reaction: proline is first activated by ATP to form Pro-AMP and then transferred to the acceptor end of tRNA(Pro). This Bartonella quintana (strain Toulouse) (Rochalimaea quintana) protein is Proline--tRNA ligase.